The chain runs to 733 residues: Alpha-galactosidase 1 (733 aa).

The active-site Nucleophile is the D480. Residue D550 is the Proton donor of the active site.

It belongs to the glycosyl hydrolase 36 family.

The catalysed reaction is Hydrolysis of terminal, non-reducing alpha-D-galactose residues in alpha-D-galactosides, including galactose oligosaccharides, galactomannans and galactolipids.. Alpha-galactosidase associated with the raffinose operon. The chain is Alpha-galactosidase 1 (agaR) from Pediococcus pentosaceus.